A 478-amino-acid chain; its full sequence is GDP-fucose protein O-fucosyltransferase 3 (478 aa).

The Cytoplasmic portion of the chain corresponds to Met-1–Arg-8. A helical; Signal-anchor for type II membrane protein membrane pass occupies residues Leu-9–Glu-31. Over Leu-32–Asp-478 the chain is Lumenal. 2 N-linked (GlcNAc...) asparagine glycosylation sites follow: Asn-110 and Asn-168. A disulfide bridge links Cys-389 with Cys-392.

Belongs to the glycosyltransferase 10 family.

It is found in the endoplasmic reticulum membrane. The catalysed reaction is L-threonyl-[protein] + GDP-beta-L-fucose = 3-O-(alpha-L-fucosyl)-L-threonyl-[protein] + GDP + H(+). It catalyses the reaction L-seryl-[protein] + GDP-beta-L-fucose = 3-O-(alpha-L-fucosyl)-L-seryl-[protein] + GDP + H(+). It functions in the pathway protein modification; protein glycosylation. In terms of biological role, protein O-fucosyltransferase that specifically catalyzes O-fucosylation of serine or threonine residues in EMI domains of target proteins, such as MMRN1, MMRN2 and EMID1. Attaches fucose through an O-glycosidic linkage. O-fucosylation of EMI domain-containing proteins may be required for facilitating protein folding and secretion. May also show alpha-(1,3)-fucosyltransferase activity toward the innermost N-acetyl glucosamine (GlcNAc) residue in biantennary N-glycan acceptors. However, this was tested with a library of synthetic substrates and this activity is unsure in vivo. May be involved in biosynthesis of Lewis X-carrying biantennary N-glycans that regulate neuron stem cell self-renewal during brain development. The sequence is that of GDP-fucose protein O-fucosyltransferase 3 (FUT10) from Canis lupus familiaris (Dog).